The following is a 64-amino-acid chain: DNA gyrase inhibitor YacG (64 aa).

4 residues coordinate Zn(2+): C7, C10, C26, and C30. The disordered stretch occupies residues 43–64; it reads KRIPGPINPDLLPYPDEGEQWQ.

Belongs to the DNA gyrase inhibitor YacG family. Interacts with GyrB. It depends on Zn(2+) as a cofactor.

Its function is as follows. Inhibits all the catalytic activities of DNA gyrase by preventing its interaction with DNA. Acts by binding directly to the C-terminal domain of GyrB, which probably disrupts DNA binding by the gyrase. The chain is DNA gyrase inhibitor YacG from Aeromonas salmonicida (strain A449).